A 578-amino-acid chain; its full sequence is Proline--tRNA ligase (578 aa).

It belongs to the class-II aminoacyl-tRNA synthetase family. ProS type 1 subfamily. Homodimer.

It is found in the cytoplasm. The catalysed reaction is tRNA(Pro) + L-proline + ATP = L-prolyl-tRNA(Pro) + AMP + diphosphate. Its function is as follows. Catalyzes the attachment of proline to tRNA(Pro) in a two-step reaction: proline is first activated by ATP to form Pro-AMP and then transferred to the acceptor end of tRNA(Pro). As ProRS can inadvertently accommodate and process non-cognate amino acids such as alanine and cysteine, to avoid such errors it has two additional distinct editing activities against alanine. One activity is designated as 'pretransfer' editing and involves the tRNA(Pro)-independent hydrolysis of activated Ala-AMP. The other activity is designated 'posttransfer' editing and involves deacylation of mischarged Ala-tRNA(Pro). The misacylated Cys-tRNA(Pro) is not edited by ProRS. The sequence is that of Proline--tRNA ligase from Burkholderia multivorans (strain ATCC 17616 / 249).